The following is a 486-amino-acid chain: Transcription factor aptf-4 (486 aa).

2 disordered regions span residues C25–M49 and L150–K173. A compositionally biased stretch (polar residues) spans L150–C169. The interval Q301–E430 is H-S-H (helix-span-helix), dimerization.

Belongs to the AP-2 family. As to quaternary structure, binds DNA as a dimer.

It is found in the nucleus. In terms of biological role, sequence-specific DNA-binding protein that interacts with enhancer elements to regulate transcription of selected genes. Required for neuroblast and epidermal morphogenesis, perhaps acting in cooperation with transcription factor aptf-2. The protein is Transcription factor aptf-4 of Caenorhabditis elegans.